A 299-amino-acid polypeptide reads, in one-letter code: 4-hydroxy-tetrahydrodipicolinate synthase (299 aa).

Thr44 is a binding site for pyruvate. Residue Tyr133 is the Proton donor/acceptor of the active site. Residue Lys162 is the Schiff-base intermediate with substrate of the active site. Pyruvate is bound at residue Ile204.

The protein belongs to the DapA family. As to quaternary structure, homotetramer; dimer of dimers.

It localises to the cytoplasm. It catalyses the reaction L-aspartate 4-semialdehyde + pyruvate = (2S,4S)-4-hydroxy-2,3,4,5-tetrahydrodipicolinate + H2O + H(+). The protein operates within amino-acid biosynthesis; L-lysine biosynthesis via DAP pathway; (S)-tetrahydrodipicolinate from L-aspartate: step 3/4. Functionally, catalyzes the condensation of (S)-aspartate-beta-semialdehyde [(S)-ASA] and pyruvate to 4-hydroxy-tetrahydrodipicolinate (HTPA). This chain is 4-hydroxy-tetrahydrodipicolinate synthase, found in Thermus thermophilus (strain ATCC BAA-163 / DSM 7039 / HB27).